The chain runs to 706 residues: Amino-acid acetyltransferase, mitochondrial (706 aa).

Disordered regions lie at residues 1 to 25 (MSSRVLASRAAQPLKRHPTVVGAGD) and 367 to 403 (NPANNSQGESVVTNPISDSNAVSESASTEPTSTPAKQ). The N-terminal 35 residues, 1 to 35 (MSSRVLASRAAQPLKRHPTVVGAGDEAYPTPRRCF), are a transit peptide targeting the mitochondrion. Polar residues predominate over residues 367–388 (NPANNSQGESVVTNPISDSNAV). Residues 389–401 (SESASTEPTSTPA) are compositionally biased toward low complexity. The 170-residue stretch at 527–696 (TRPNMNLDDP…YEAVCRSIQP (170 aa)) folds into the N-acetyltransferase domain.

The protein belongs to the acetyltransferase family.

It localises to the mitochondrion. The catalysed reaction is L-glutamate + acetyl-CoA = N-acetyl-L-glutamate + CoA + H(+). The protein operates within amino-acid biosynthesis; L-arginine biosynthesis; N(2)-acetyl-L-ornithine from L-glutamate: step 1/4. N-acetylglutamate synthase involved in arginine biosynthesis. In Emericella nidulans (strain FGSC A4 / ATCC 38163 / CBS 112.46 / NRRL 194 / M139) (Aspergillus nidulans), this protein is Amino-acid acetyltransferase, mitochondrial (arg2).